A 245-amino-acid polypeptide reads, in one-letter code: 1-(5-phosphoribosyl)-5-[(5-phosphoribosylamino)methylideneamino] imidazole-4-carboxamide isomerase (245 aa).

Catalysis depends on Asp-7, which acts as the Proton acceptor. Asp-129 serves as the catalytic Proton donor.

The protein belongs to the HisA/HisF family.

The protein localises to the cytoplasm. It carries out the reaction 1-(5-phospho-beta-D-ribosyl)-5-[(5-phospho-beta-D-ribosylamino)methylideneamino]imidazole-4-carboxamide = 5-[(5-phospho-1-deoxy-D-ribulos-1-ylimino)methylamino]-1-(5-phospho-beta-D-ribosyl)imidazole-4-carboxamide. It functions in the pathway amino-acid biosynthesis; L-histidine biosynthesis; L-histidine from 5-phospho-alpha-D-ribose 1-diphosphate: step 4/9. The protein is 1-(5-phosphoribosyl)-5-[(5-phosphoribosylamino)methylideneamino] imidazole-4-carboxamide isomerase of Shewanella baltica (strain OS223).